Consider the following 731-residue polypeptide: Auxin response factor 3 (731 aa).

Positions 1–22 (MASSASSSSSPSSRPPLMALPS) are enriched in low complexity. Residues 1 to 41 (MASSASSSSSPSSRPPLMALPSFYRPPWPSERGGEQRATDC) are disordered. The TF-B3 DNA-binding region spans 191-293 (FCKTLTASDT…ELRLGVRRAT (103 aa)).

Belongs to the ARF family. Homo and heterodimers. As to expression, expressed in roots, culms, leaves and young panicles.

It is found in the nucleus. Its function is as follows. Auxin response factors (ARFs) are transcriptional factors that bind specifically to the DNA sequence 5'-TGTCTC-3' found in the auxin-responsive promoter elements (AuxREs). This Oryza sativa subsp. japonica (Rice) protein is Auxin response factor 3 (ARF3).